A 327-amino-acid chain; its full sequence is uncharacterized protein (327 aa).

Residues 1–17 (MASMAAAIAASRSAVMS) show a composition bias toward low complexity. The segment at 1–22 (MASMAAAIAASRSAVMSGNRPL) is disordered. Position 2 is an N-acetylalanine (alanine 2). Serine 37 carries the post-translational modification Phosphoserine. A disordered region spans residues 76–113 (GPRAPAPRDPGDSEELTRFPGLRGPTGQKVVRFGDEDL). Position 129 is a phosphoserine (serine 129). Positions 134–148 (SISALSIQEPSNGTA) are enriched in polar residues. Residues 134-299 (SISALSIQEP…PDVRQDDGED (166 aa)) are disordered. Positions 162 to 176 (SQALKSSQGSRSSSL) are enriched in low complexity. Serine 175 carries the phosphoserine modification. Composition is skewed to basic and acidic residues over residues 182–202 (TRKE…RGEG) and 233–252 (PAPK…RQEQ). Position 289 is a phosphoserine (serine 289).

It is found in the cytoplasm. This is an uncharacterized protein from Homo sapiens (Human).